An 880-amino-acid polypeptide reads, in one-letter code: MTSAETNAYDPQQVESAAQKYWDATRAFEVDETSDKPKYYCLSMLPYPSGALHMGHVRNYTIGDVISRYKRMTGHNVLQPMGWDAFGLPAENAAIKNKTAPAAWTYKNIEHMRGQFKAMGYAVDWSREFATCRPDYYVHEQRMFTRLMRKGLAYRRNAVVNWDPVDQTVLANEQVIDGRGWRSGALVEKREIPQWFLRITDYAQELLDGLDELDGWPDSVKTMQRNWIGRSEGLEIQFDVRDVDGTALDPLRVFTTRPDTVMGVTFVSIAAEHPLALHAAKNNPELAALLSEMKQGGVSEAELETQEKRGMDTGLRAIHPVTGEKVPVWVANFVLMGYGTGAVMAVPGHDQRDNEVANKYGLPIKQVIALKDPRNDDERTWDGARWQDWYSDKNRAFELVNSAEFDGLDFQGAFEALAERFERKAQGQRRVNYRLRDWGVSRQRYWGCPIPVIYCDKCGAVPVPEEQLPVVLPEDVAFSGTGSPIKTDPEWRKTTCPECGGAAERETDTFDTFMESSWYYARYTSPGARDAVDKRGNYWLPVDQYIGGIEHAILHLMYFRFYHKLLRDARMVDSNEPARNLLCQGMVIAETYYRPNPDGSKDWINPADVEVQRDERGRITGATLIADGQPVVVGGTEKMSKSKNNGVDPQAMVDKYGADTVRLFSMFAAPPEQSLEWNEAGVDGMARFLRRLWAQVQKHAADGAAPALDVAALDANQKALRRKTHETIGKVGDDYGRRHSFNTAIAAVMELMNALAKFEDGSEQGRAVRQEALQAIVLLLNPITPHASHALWQVLGHGETLLEDQPFPQADAGALVRDALTLAVQVNGKLRGTIEVAADAAREQVEALALAEPNAAKFMEGLTVRKIIIVPGKIVNIVAA.

The short motif at 46–56 (PYPSGALHMGH) is the 'HIGH' region element. The 'KMSKS' region signature appears at 638–642 (KMSKS). Lys-641 contacts ATP.

The protein belongs to the class-I aminoacyl-tRNA synthetase family.

It is found in the cytoplasm. The enzyme catalyses tRNA(Leu) + L-leucine + ATP = L-leucyl-tRNA(Leu) + AMP + diphosphate. This is Leucine--tRNA ligase from Stenotrophomonas maltophilia (strain K279a).